Consider the following 365-residue polypeptide: Eukaryotic translation initiation factor 3 subunit H (365 aa).

One can recognise an MPN domain in the interval 11–160 (VKVEALVVMK…LRAFRLSPKF (150 aa)).

It belongs to the eIF-3 subunit H family. In terms of assembly, component of the eukaryotic translation initiation factor 3 (eIF-3) complex.

The protein resides in the cytoplasm. In terms of biological role, component of the eukaryotic translation initiation factor 3 (eIF-3) complex, which is involved in protein synthesis of a specialized repertoire of mRNAs and, together with other initiation factors, stimulates binding of mRNA and methionyl-tRNAi to the 40S ribosome. The eIF-3 complex specifically targets and initiates translation of a subset of mRNAs involved in cell proliferation. This Aspergillus niger (strain ATCC MYA-4892 / CBS 513.88 / FGSC A1513) protein is Eukaryotic translation initiation factor 3 subunit H.